The primary structure comprises 238 residues: Histone H1 (238 aa).

2 stretches are compositionally biased toward low complexity: residues 21-34 and 123-132; these read AAVD…AKAP and AKAPAAVKPK. Disordered stretches follow at residues 21–57 and 123–238; these read AAVD…AHPS and AKAP…KAKK. One can recognise an H15 domain in the interval 54–124; it reads AHPSYAEMVS…KVKGSYKLAK (71 aa). A compositionally biased stretch (basic residues) spans 133 to 197; it reads TATKKKPAAK…AAKPKAKAAA (65 aa). 2 stretches are compositionally biased toward low complexity: residues 198–208 and 217–230; these read KKAPAAATPKK and KRAT…PAKK.

Belongs to the histone H1/H5 family.

It localises to the nucleus. It is found in the chromosome. In terms of biological role, histones H1 are necessary for the condensation of nucleosome chains into higher-order structures. This is Histone H1 from Triticum aestivum (Wheat).